The primary structure comprises 84 residues: Small ribosomal subunit protein bS16 (84 aa).

The protein belongs to the bacterial ribosomal protein bS16 family.

The protein is Small ribosomal subunit protein bS16 of Thioalkalivibrio sulfidiphilus (strain HL-EbGR7).